The primary structure comprises 141 residues: Large ribosomal subunit protein uL11 (141 aa).

This sequence belongs to the universal ribosomal protein uL11 family. Part of the ribosomal stalk of the 50S ribosomal subunit. Interacts with L10 and the large rRNA to form the base of the stalk. L10 forms an elongated spine to which L12 dimers bind in a sequential fashion forming a multimeric L10(L12)X complex. Post-translationally, one or more lysine residues are methylated.

Functionally, forms part of the ribosomal stalk which helps the ribosome interact with GTP-bound translation factors. The polypeptide is Large ribosomal subunit protein uL11 (Dinoroseobacter shibae (strain DSM 16493 / NCIMB 14021 / DFL 12)).